We begin with the raw amino-acid sequence, 1469 residues long: ATP-binding cassette transporter abc4 (1469 aa).

Transmembrane regions (helical) follow at residues 21-40 (SLYY…FPTH), 55-74 (YSLE…RWIT), 94-114 (HGIL…FMFV), 121-141 (AFSD…LFLL), 160-180 (VLLN…PFFF), 189-209 (YSPF…IPLF), 296-316 (ILGM…SPIA), and 337-357 (WIVL…FYLF). An ABC transmembrane type-1 1 domain is found at 296–580 (ILGMGVSSFM…IAYLMRQIVQ (285 aa)). N-linked (GlcNAc...) asparagine glycosylation occurs at N386. A run of 2 helical transmembrane segments spans residues 412–432 (EFIH…YLLQ) and 441–461 (VGLA…PLVA). N510 carries N-linked (GlcNAc...) asparagine glycosylation. A run of 2 helical transmembrane segments spans residues 524–544 (VLVE…FTTI) and 553–573 (IAFT…WIAY). In terms of domain architecture, ABC transporter 1 spans 611-840 (IGFFNASLTW…LAEQAASASE (230 aa)). A glycan (N-linked (GlcNAc...) asparagine) is linked at N615. Residue 648–655 (GPTGSGKS) participates in ATP binding. N-linked (GlcNAc...) asparagine glycans are attached at residues N691, N790, and N815. Residues 894–914 (GFYVAAVLLFFVTTQATSILI) form a helical membrane-spanning segment. The ABC transmembrane type-1 2 domain occupies 897 to 1176 (VAAVLLFFVT…FVRSCNSLQA (280 aa)). N923 carries N-linked (GlcNAc...) asparagine glycosylation. A helical transmembrane segment spans residues 936-956 (FLFVYGTMLLAYSLLDFLRTV). The N-linked (GlcNAc...) asparagine glycan is linked to N1007. 5 helical membrane passes run 1009–1029 (SGWL…ILSV), 1033–1053 (MPIF…FGLL), 1065–1085 (ISIY…GVSV), 1120–1140 (VAVR…LIAL), and 1148–1168 (GVVG…LLFV). The 240-residue stretch at 1214-1453 (FNHVSVSYSA…NGHFRRMCDG (240 aa)) folds into the ABC transporter 2 domain. An ATP-binding site is contributed by 1246–1253 (GRTGSGKS). N1355 carries N-linked (GlcNAc...) asparagine glycosylation.

The protein belongs to the ABC transporter superfamily. ABCC family. Conjugate transporter (TC 3.A.1.208) subfamily.

Its subcellular location is the vacuole membrane. It carries out the reaction ATP + H2O + xenobioticSide 1 = ADP + phosphate + xenobioticSide 2.. In terms of biological role, involved in detoxification of xenobiotics, and vacuolar sequestration of glutathione S-conjugates. Together with abc2, required for accumulation of a red pigment (ade pigment) in the vacuole of a mutant affected in the adenine biosynthetic pathway. The polypeptide is ATP-binding cassette transporter abc4 (Schizosaccharomyces pombe (strain 972 / ATCC 24843) (Fission yeast)).